The primary structure comprises 23 residues: Clavanin-B (23 aa).

Position 23 is a phenylalanine amide (Phe-23).

It is found in the secreted. Functionally, has antimicrobial activity. This chain is Clavanin-B, found in Styela clava (Sea squirt).